Consider the following 148-residue polypeptide: Nucleoside diphosphate kinase 1 (148 aa).

6 residues coordinate ATP: lysine 9, phenylalanine 57, arginine 85, threonine 91, arginine 102, and asparagine 112. Histidine 115 (pros-phosphohistidine intermediate) is an active-site residue.

Belongs to the NDK family. It depends on Mg(2+) as a cofactor.

The enzyme catalyses a 2'-deoxyribonucleoside 5'-diphosphate + ATP = a 2'-deoxyribonucleoside 5'-triphosphate + ADP. It carries out the reaction a ribonucleoside 5'-diphosphate + ATP = a ribonucleoside 5'-triphosphate + ADP. In terms of biological role, major role in the synthesis of nucleoside triphosphates other than ATP. The ATP gamma phosphate is transferred to the NDP beta phosphate via a ping-pong mechanism, using a phosphorylated active-site intermediate. This is Nucleoside diphosphate kinase 1 from Nicotiana tabacum (Common tobacco).